The following is a 548-amino-acid chain: Cleavage and polyadenylation specificity factor subunit 6 (548 aa).

The 81-residue stretch at 81–161 (IALYIGNLTW…QKPIVTPCNK (81 aa)) folds into the RRM domain. Over residues 169 to 180 (MQSRKTATQAGQ) the composition is skewed to polar residues. Disordered regions lie at residues 169–401 (MQSR…MDVV) and 473–548 (LHGI…YRHR). Pro residues-rich tracts occupy residues 221–279 (PAGP…PPVM), 294–362 (PPGP…PPPG), and 373–384 (GPPPSDPYGRPP). 2 stretches are compositionally biased toward basic and acidic residues: residues 385–400 (PYERGDYGPPGRDMDV) and 490–500 (RSRERDHSRSR). The span at 501-511 (EKSRRHKSRSR) shows a compositional bias: basic residues. Basic and acidic residues predominate over residues 512-548 (DRHDDYYRERSRERERHRDRERDRDRERDREREYRHR).

It belongs to the RRM CPSF6/7 family. Component of the cleavage factor Im (CFIm) complex.

The protein resides in the nucleus. It localises to the nucleoplasm. Its subcellular location is the nucleus speckle. The protein localises to the cytoplasm. Its function is as follows. Component of the cleavage factor Im (CFIm) complex that functions as an activator of the pre-mRNA 3'-end cleavage and polyadenylation processing required for the maturation of pre-mRNA into functional mRNAs. CFIm contributes to the recruitment of multiprotein complexes on specific sequences on the pre-mRNA 3'-end, so called cleavage and polyadenylation signals (pA signals). Most pre-mRNAs contain multiple pA signals, resulting in alternative cleavage and polyadenylation (APA) producing mRNAs with variable 3'-end formation. The CFIm complex acts as a key regulator of cleavage and polyadenylation site choice during APA through its binding to 5'-UGUA-3' elements localized in the 3'-untranslated region (UTR) for a huge number of pre-mRNAs. Plays a role in mRNA export. The sequence is that of Cleavage and polyadenylation specificity factor subunit 6 from Xenopus laevis (African clawed frog).